The sequence spans 211 residues: UPF0056 membrane protein YvbG (211 aa).

6 helical membrane-spanning segments follow: residues 1-21 (MMFS…NPIG), 47-67 (ILSF…FKLF), 69-89 (INIH…AYNL), 114-134 (ISVT…ATVM), 150-170 (MIGI…SAFI), and 188-208 (LILA…MFPV).

The protein belongs to the UPF0056 (MarC) family.

It localises to the cell membrane. This is UPF0056 membrane protein YvbG (yvbG) from Bacillus subtilis (strain 168).